A 342-amino-acid polypeptide reads, in one-letter code: Methionine import ATP-binding protein MetN 2 (342 aa).

Positions 2–241 (ISIEGLSKVF…PKQLVTRKFV (240 aa)) constitute an ABC transporter domain. 38–45 (GYSGAGKS) contributes to the ATP binding site.

Belongs to the ABC transporter superfamily. Methionine importer (TC 3.A.1.24) family. As to quaternary structure, the complex is composed of two ATP-binding proteins (MetN), two transmembrane proteins (MetI) and a solute-binding protein (MetQ).

The protein localises to the cell membrane. It catalyses the reaction L-methionine(out) + ATP + H2O = L-methionine(in) + ADP + phosphate + H(+). The enzyme catalyses D-methionine(out) + ATP + H2O = D-methionine(in) + ADP + phosphate + H(+). In terms of biological role, part of the ABC transporter complex MetNIQ involved in methionine import. Responsible for energy coupling to the transport system. The sequence is that of Methionine import ATP-binding protein MetN 2 from Oceanobacillus iheyensis (strain DSM 14371 / CIP 107618 / JCM 11309 / KCTC 3954 / HTE831).